Consider the following 159-residue polypeptide: Succinate dehydrogenase [ubiquinone] cytochrome b small subunit, mitochondrial (159 aa).

Residues 1-56 (MAVLWRLSAVCGAQGGRALLLRTPVVRPAHISAFLQDRPIPEWCGVQHIHLSPGHH) constitute a mitochondrion transit peptide. Residues 57–63 (SGSKAAS) lie on the Mitochondrial matrix side of the membrane. Residues 64 to 85 (LHWTSERVVSVLLLGLLPAAYL) form a helical membrane-spanning segment. The Mitochondrial intermembrane portion of the chain corresponds to 86 to 90 (NPCSA). A helical transmembrane segment spans residues 91–111 (MDYSLAATLTLHGHWGLGQVV). His102 serves as a coordination point for heme b. At 112–120 (TDYVHGDAS) the chain is on the mitochondrial matrix side. Tyr114 contributes to the a ubiquinone binding site. A helical membrane pass occupies residues 121–142 (QKAAKAGLLALSALTFAGLCYF). Topologically, residues 143–159 (NYHDVGICKAVAMLWKL) are mitochondrial intermembrane.

It belongs to the CybS family. In terms of assembly, component of complex II composed of four subunits: the flavoprotein (FP) SDHA, iron-sulfur protein (IP) SDHB, and a cytochrome b560 composed of SDHC and SDHD.

The protein resides in the mitochondrion inner membrane. It participates in carbohydrate metabolism; tricarboxylic acid cycle. Its function is as follows. Membrane-anchoring subunit of succinate dehydrogenase (SDH) that is involved in complex II of the mitochondrial electron transport chain and is responsible for transferring electrons from succinate to ubiquinone (coenzyme Q). SDH also oxidizes malate to the non-canonical enol form of oxaloacetate, enol-oxaloacetate. Enol-oxaloacetate, which is a potent inhibitor of the succinate dehydrogenase activity, is further isomerized into keto-oxaloacetate. The sequence is that of Succinate dehydrogenase [ubiquinone] cytochrome b small subunit, mitochondrial (SDHD) from Pongo abelii (Sumatran orangutan).